We begin with the raw amino-acid sequence, 158 residues long: Transcription elongation factor GreA (158 aa).

A coiled-coil region spans residues 53–73; sequence EQQSFIEGRIQEIEGKLSNAQ.

It belongs to the GreA/GreB family.

Necessary for efficient RNA polymerase transcription elongation past template-encoded arresting sites. The arresting sites in DNA have the property of trapping a certain fraction of elongating RNA polymerases that pass through, resulting in locked ternary complexes. Cleavage of the nascent transcript by cleavage factors such as GreA or GreB allows the resumption of elongation from the new 3'terminus. GreA releases sequences of 2 to 3 nucleotides. The sequence is that of Transcription elongation factor GreA from Halorhodospira halophila (strain DSM 244 / SL1) (Ectothiorhodospira halophila (strain DSM 244 / SL1)).